We begin with the raw amino-acid sequence, 236 residues long: DNA repair protein RecO (236 aa).

It belongs to the RecO family.

Functionally, involved in DNA repair and RecF pathway recombination. The sequence is that of DNA repair protein RecO from Rickettsia typhi (strain ATCC VR-144 / Wilmington).